The sequence spans 154 residues: Protein X (154 aa).

The interval 68–117 (PCALRFTSARCMETTVNAHQILPKVLHKRTLGLPAMSTTDLEAYFKDSVF) is mitochondrial targeting sequence.

This sequence belongs to the orthohepadnavirus protein X family. As to quaternary structure, may form homodimer. May interact with host CEBPA, CFLAR, CREB1, DDB1, E4F1, HBXIP, HSPD1/HSP60, NFKBIA, POLR2E and SMAD4. Interacts with host SMC5-SMC6 complex and induces its degradation. Interacts with host TRPC4AP; leading to prevent ubiquitination of TRPC4AP. Interacts with host PLSCR1; this interaction promotes ubiquitination and degradation of HBx and impairs HBx-mediated cell proliferation. In terms of processing, a fraction may be phosphorylated in insect cells and HepG2 cells, a human hepatoblastoma cell line. Phosphorylated in vitro by host protein kinase C or mitogen-activated protein kinase. N-acetylated in insect cells.

The protein resides in the host cytoplasm. It localises to the host nucleus. The protein localises to the host mitochondrion. Its function is as follows. Multifunctional protein that plays a role in silencing host antiviral defenses and promoting viral transcription. Does not seem to be essential for HBV infection. May be directly involved in development of cirrhosis and liver cancer (hepatocellular carcinoma). Most of cytosolic activities involve modulation of cytosolic calcium. The effect on apoptosis is controversial depending on the cell types in which the studies have been conducted. May induce apoptosis by localizing in mitochondria and causing loss of mitochondrial membrane potential. May also modulate apoptosis by binding host CFLAR, a key regulator of the death-inducing signaling complex (DISC). Promotes viral transcription by using the host E3 ubiquitin ligase DDB1 to target the SMC5-SMC6 complex to proteasomal degradation. This host complex would otherwise bind to viral episomal DNA, and prevents its transcription. Moderately stimulates transcription of many different viral and cellular transcription elements. Promoters and enhancers stimulated by HBx contain DNA binding sites for NF-kappa-B, AP-1, AP-2, c-EBP, ATF/CREB, or the calcium-activated factor NF-AT. This chain is Protein X, found in Homo sapiens (Human).